We begin with the raw amino-acid sequence, 147 residues long: Hemoglobin subunit epsilon (147 aa).

The Globin domain maps to H3 to H147. Residues S14 and S51 each carry the phosphoserine modification. Positions 64 and 93 each coordinate heme b.

It belongs to the globin family. As to quaternary structure, heterotetramer of two alpha chains and two epsilon chains in early embryonic hemoglobin Gower-2; two zeta chains and two epsilon chains in early embryonic hemoglobin Gower-1. In terms of tissue distribution, red blood cells.

Its function is as follows. The epsilon chain is a beta-type chain of early mammalian embryonic hemoglobin. The chain is Hemoglobin subunit epsilon (HBE1) from Leontopithecus rosalia (Golden lion tamarin).